The following is a 459-amino-acid chain: Phosphoenolpyruvate carboxylase (459 aa).

The protein belongs to the PEPCase type 2 family. In terms of assembly, homotetramer. The cofactor is Mg(2+).

It carries out the reaction oxaloacetate + phosphate = phosphoenolpyruvate + hydrogencarbonate. Catalyzes the irreversible beta-carboxylation of phosphoenolpyruvate (PEP) to form oxaloacetate (OAA), a four-carbon dicarboxylic acid source for the tricarboxylic acid cycle. The protein is Phosphoenolpyruvate carboxylase of Pyrobaculum calidifontis (strain DSM 21063 / JCM 11548 / VA1).